We begin with the raw amino-acid sequence, 500 residues long: Probable cytosol aminopeptidase (500 aa).

2 residues coordinate Mn(2+): K264 and D269. Residue K276 is part of the active site. The Mn(2+) site is built by D287, D346, and E348. R350 is an active-site residue.

Belongs to the peptidase M17 family. It depends on Mn(2+) as a cofactor.

The protein resides in the cytoplasm. It carries out the reaction Release of an N-terminal amino acid, Xaa-|-Yaa-, in which Xaa is preferably Leu, but may be other amino acids including Pro although not Arg or Lys, and Yaa may be Pro. Amino acid amides and methyl esters are also readily hydrolyzed, but rates on arylamides are exceedingly low.. It catalyses the reaction Release of an N-terminal amino acid, preferentially leucine, but not glutamic or aspartic acids.. In terms of biological role, presumably involved in the processing and regular turnover of intracellular proteins. Catalyzes the removal of unsubstituted N-terminal amino acids from various peptides. In Rhodopseudomonas palustris (strain ATCC BAA-98 / CGA009), this protein is Probable cytosol aminopeptidase.